A 231-amino-acid polypeptide reads, in one-letter code: Ferredoxin-type protein NapG (231 aa).

The tat-type signal signal peptide spans 1-41 (MSRSAKPQNGRRRFLRDVVRTAGGLAAVGVALGLQQQTARA). 4 consecutive 4Fe-4S ferredoxin-type domains span residues 50–81 (GAINENAFASACVRCGQCVQACPYDTLKLATL), 89–121 (TPYFVARDIPCEMCEDIPCAKVCPSGALDREIE), 130–166 (LAVLVDQENCLNFQGLRCDVCYRECPKIDEAITLELE), and 177–208 (FLPTVHSDACTGCGKCEKVCVLEQPAIKVLPL). Positions 61, 64, 67, 71, 99, 102, 107, 111, 139, 147, 150, 154, 186, 189, 192, and 196 each coordinate [4Fe-4S] cluster.

The cofactor is [4Fe-4S] cluster. Exported by the Tat system. The position of the signal peptide cleavage has not been experimentally proven.

It localises to the periplasm. Functionally, required for electron transfer from ubiquinol, via NapC, to the periplasmic nitrate reductase NapAB complex. This is Ferredoxin-type protein NapG (napG) from Escherichia coli (strain K12).